The chain runs to 850 residues: Adenylate cyclase (850 aa).

Residues 1 to 535 (MYLYIETLKQ…DISHHFPLRL (535 aa)) are catalytic. The segment at 541–850 (KALYSPCEIR…SLPTKQCQLH (310 aa)) is regulatory.

Belongs to the adenylyl cyclase class-1 family.

It localises to the cytoplasm. The catalysed reaction is ATP = 3',5'-cyclic AMP + diphosphate. Its activity is regulated as follows. The regulatory domain is involved in the regulation of cyclase activity by the carbon source. The polypeptide is Adenylate cyclase (cya) (Yersinia pestis).